The sequence spans 351 residues: Phosphoribosylformylglycinamidine cyclo-ligase (351 aa).

This sequence belongs to the AIR synthase family.

The protein localises to the cytoplasm. It carries out the reaction 2-formamido-N(1)-(5-O-phospho-beta-D-ribosyl)acetamidine + ATP = 5-amino-1-(5-phospho-beta-D-ribosyl)imidazole + ADP + phosphate + H(+). It functions in the pathway purine metabolism; IMP biosynthesis via de novo pathway; 5-amino-1-(5-phospho-D-ribosyl)imidazole from N(2)-formyl-N(1)-(5-phospho-D-ribosyl)glycinamide: step 2/2. This chain is Phosphoribosylformylglycinamidine cyclo-ligase, found in Burkholderia cenocepacia (strain HI2424).